The chain runs to 447 residues: 2-oxoadipate dioxygenase/decarboxylase (447 aa).

Residues histidine 68, arginine 72, and histidine 224 each coordinate 2-oxoadipate. Histidine 68 contributes to the Fe(2+) binding site. 2 residues coordinate Fe(2+): histidine 224 and glutamate 290. Valine 391 is a 2-oxoadipate binding site.

The protein belongs to the 2-oxoadipate dioxygenase/decarboxylase family. It depends on Fe(2+) as a cofactor.

It catalyses the reaction 2-oxoadipate + O2 = (R)-2-hydroxyglutarate + CO2. Functionally, catalyzes the decarboxylation and hydroxylation of 2-oxoadipate (2OA) to form D-2-hydroxyglutarate (D-2-HGA). This Escherichia coli (strain K12) protein is 2-oxoadipate dioxygenase/decarboxylase (ydcJ).